We begin with the raw amino-acid sequence, 284 residues long: Type II methyltransferase M1.LlaDCHI (284 aa).

Residues tryptophan 17, lysine 21, aspartate 62, and aspartate 194 each coordinate S-adenosyl-L-methionine.

The protein belongs to the N(4)/N(6)-methyltransferase family.

The catalysed reaction is a 2'-deoxyadenosine in DNA + S-adenosyl-L-methionine = an N(6)-methyl-2'-deoxyadenosine in DNA + S-adenosyl-L-homocysteine + H(+). Functionally, an alpha subtype methylase, recognizes the double-stranded sequence 5'-GATC-3', methylates A-2 on both strands, and protects the DNA from cleavage by the LlaDCHI endonuclease. This chain is Type II methyltransferase M1.LlaDCHI, found in Lactococcus lactis subsp. cremoris (Streptococcus cremoris).